The primary structure comprises 343 residues: DNA repair and recombination protein RadA (343 aa).

Position 107 to 114 (107 to 114 (GEFGAGKS)) interacts with ATP.

This sequence belongs to the eukaryotic RecA-like protein family.

Functionally, involved in DNA repair and in homologous recombination. Binds and assemble on single-stranded DNA to form a nucleoprotein filament. Hydrolyzes ATP in a ssDNA-dependent manner and promotes DNA strand exchange between homologous DNA molecules. The sequence is that of DNA repair and recombination protein RadA from Haloquadratum walsbyi (strain DSM 16790 / HBSQ001).